Reading from the N-terminus, the 273-residue chain is SPRY domain-containing SOCS box protein 4 (273 aa).

The interval 1 to 34 (MGQKLSGSLKSVEVREPALRPAKRELRGAEPGRP) is disordered. Residues 12 to 34 (VEVREPALRPAKRELRGAEPGRP) are compositionally biased toward basic and acidic residues. A B30.2/SPRY domain is found at 34–233 (PARLDQLLDM…MRYINGLDPE (200 aa)). The SOCS box domain occupies 234–273 (PLPLMDLCRRSIRSALGRQRLQDISSLPLPQSLKNYLQYQ).

The protein belongs to the SPSB family. In terms of assembly, component of the probable ECS(SPSB4) E3 ubiquitin-protein ligase complex which contains CUL5, RNF7/RBX2, Elongin BC complex and SPSB4. Interacts with CUL5; RNF7; ELOB and ELOC. Interacts with MET. Interacts (via B30.2/SPRY domain) with PAWR; this interaction occurs in association with the Elongin BC complex. Interacts with NOS2. Interacts with EPHB2.

Its subcellular location is the cytoplasm. The protein resides in the cytosol. It participates in protein modification; protein ubiquitination. Substrate recognition component of a SCF-like ECS (Elongin BC-CUL2/5-SOCS-box protein) E3 ubiquitin-protein ligase complex which mediates the ubiquitination and subsequent proteasomal degradation of target proteins. Negatively regulates nitric oxide (NO) production and limits cellular toxicity in activated macrophages by mediating the ubiquitination and proteasomal degradation of NOS2. Acts as a bridge which links NOS2 with the ECS E3 ubiquitin ligase complex components ELOC and CUL5. Diminishes EphB2-dependent cell repulsive responses by mediating the ubiquitination and degradation of EphB2/CTF2. Regulates cellular clock function by mediating the ubiquitin/proteasome-dependent degradation of the circadian transcriptional repressor NR1D1. This Homo sapiens (Human) protein is SPRY domain-containing SOCS box protein 4 (SPSB4).